Reading from the N-terminus, the 557-residue chain is Membrane protein insertase YidC (557 aa).

A helical transmembrane segment spans residues I7–Y27. A disordered region spans residues A42–A77. The segment covering G52–A77 has biased composition (polar residues). 3 helical membrane passes run W370–A390, L436–L456, and P514–V534.

Belongs to the OXA1/ALB3/YidC family. Type 1 subfamily. As to quaternary structure, interacts with the Sec translocase complex via SecD. Specifically interacts with transmembrane segments of nascent integral membrane proteins during membrane integration.

Its subcellular location is the cell inner membrane. Its function is as follows. Required for the insertion and/or proper folding and/or complex formation of integral membrane proteins into the membrane. Involved in integration of membrane proteins that insert both dependently and independently of the Sec translocase complex, as well as at least some lipoproteins. Aids folding of multispanning membrane proteins. This chain is Membrane protein insertase YidC, found in Azotobacter vinelandii (strain DJ / ATCC BAA-1303).